Consider the following 311-residue polypeptide: Cathepsin B (311 aa).

Residues M1–A19 form the signal peptide. Positions V20 to Q78 are excised as a propeptide. N91 carries N-linked (GlcNAc...) asparagine glycosylation. 5 disulfides stabilise this stretch: C92–C121, C104–C145, C138–C191, C167–C195, and C175–C182. C107 is a catalytic residue. The N-linked (GlcNAc...) asparagine glycan is linked to N198. Active-site residues include H261 and N281. An N-linked (GlcNAc...) asparagine glycan is attached at N290.

Belongs to the peptidase C1 family.

Its subcellular location is the lysosome. It catalyses the reaction Hydrolysis of proteins with broad specificity for peptide bonds. Preferentially cleaves -Arg-Arg-|-Xaa bonds in small molecule substrates (thus differing from cathepsin L). In addition to being an endopeptidase, shows peptidyl-dipeptidase activity, liberating C-terminal dipeptides.. In terms of biological role, thiol protease which is believed to participate in intracellular degradation and turnover of proteins. In Dictyostelium discoideum (Social amoeba), this protein is Cathepsin B (ctsB).